Consider the following 250-residue polypeptide: Trypsin (250 aa).

Residues 1 to 15 form the signal peptide; sequence MRLLALLLMVGAAVA. A propeptide spans 16–22 (activation peptide); it reads VPREDGR. Positions 23–247 constitute a Peptidase S1 domain; sequence IIGGHECAAH…FLGWIERTLE (225 aa). Intrachain disulfides connect C29/C163, C47/C63, C133/C236, C140/C209, C174/C188, and C199/C223. Residues H62 and D106 each act as charge relay system in the active site. Residue S203 is the Charge relay system of the active site.

The protein belongs to the peptidase S1 family.

It is found in the secreted. Its subcellular location is the extracellular space. It carries out the reaction Preferential cleavage: Arg-|-Xaa, Lys-|-Xaa.. This chain is Trypsin, found in Pleuronectes platessa (European plaice).